The sequence spans 269 residues: Tryptophan synthase alpha chain (269 aa).

Catalysis depends on proton acceptor residues glutamate 49 and aspartate 60.

This sequence belongs to the TrpA family. Tetramer of two alpha and two beta chains.

The enzyme catalyses (1S,2R)-1-C-(indol-3-yl)glycerol 3-phosphate + L-serine = D-glyceraldehyde 3-phosphate + L-tryptophan + H2O. It functions in the pathway amino-acid biosynthesis; L-tryptophan biosynthesis; L-tryptophan from chorismate: step 5/5. Its function is as follows. The alpha subunit is responsible for the aldol cleavage of indoleglycerol phosphate to indole and glyceraldehyde 3-phosphate. The protein is Tryptophan synthase alpha chain of Buchnera aphidicola subsp. Acyrthosiphon pisum (strain APS) (Acyrthosiphon pisum symbiotic bacterium).